The chain runs to 352 residues: UDP-N-acetylglucosamine--N-acetylmuramyl-(pentapeptide) pyrophosphoryl-undecaprenol N-acetylglucosamine transferase 3 (352 aa).

Residues 11 to 13 (SAG), R164, S194, and Q289 each bind UDP-N-acetyl-alpha-D-glucosamine.

This sequence belongs to the glycosyltransferase 28 family. MurG subfamily.

Its subcellular location is the cell membrane. The enzyme catalyses di-trans,octa-cis-undecaprenyl diphospho-N-acetyl-alpha-D-muramoyl-L-alanyl-D-glutamyl-meso-2,6-diaminopimeloyl-D-alanyl-D-alanine + UDP-N-acetyl-alpha-D-glucosamine = di-trans,octa-cis-undecaprenyl diphospho-[N-acetyl-alpha-D-glucosaminyl-(1-&gt;4)]-N-acetyl-alpha-D-muramoyl-L-alanyl-D-glutamyl-meso-2,6-diaminopimeloyl-D-alanyl-D-alanine + UDP + H(+). Its pathway is cell wall biogenesis; peptidoglycan biosynthesis. Its function is as follows. Cell wall formation. Catalyzes the transfer of a GlcNAc subunit on undecaprenyl-pyrophosphoryl-MurNAc-pentapeptide (lipid intermediate I) to form undecaprenyl-pyrophosphoryl-MurNAc-(pentapeptide)GlcNAc (lipid intermediate II). The chain is UDP-N-acetylglucosamine--N-acetylmuramyl-(pentapeptide) pyrophosphoryl-undecaprenol N-acetylglucosamine transferase 3 from Bacillus thuringiensis (strain Al Hakam).